A 64-amino-acid polypeptide reads, in one-letter code: U-myrmeciitoxin(01)-Mg4b (64 aa).

Residues M1–G25 form the signal peptide.

The protein belongs to the ant myrmeciitoxin-01 family. In terms of assembly, homodimer; disulfide-linked. Contains 2 intrachain disulfide bonds (per chain) and 1 interchain disulfide bond. As to expression, expressed by the venom gland.

The protein resides in the secreted. In terms of biological role, may have antimicrobial properties, like most ant linear peptides. The chain is U-myrmeciitoxin(01)-Mg4b from Myrmecia gulosa (Red bulldog ant).